A 68-amino-acid chain; its full sequence is Glucagon-1 (68 aa).

This sequence belongs to the glucagon family.

The protein resides in the secreted. In terms of biological role, promotes hydrolysis of glycogen and lipids, and raises the blood sugar level. The protein is Glucagon-1 (gcg) of Oncorhynchus kisutch (Coho salmon).